We begin with the raw amino-acid sequence, 237 residues long: Ribosomal RNA small subunit methyltransferase G (237 aa).

Residues Gly-78, Phe-83, 129–130 (AE), and Arg-148 each bind S-adenosyl-L-methionine. Positions 216–237 (SKKKETPNKYPRKAGTPNKKPL) are disordered.

This sequence belongs to the methyltransferase superfamily. RNA methyltransferase RsmG family.

It is found in the cytoplasm. Specifically methylates the N7 position of a guanine in 16S rRNA. The protein is Ribosomal RNA small subunit methyltransferase G of Streptococcus agalactiae serotype Ia (strain ATCC 27591 / A909 / CDC SS700).